Here is a 420-residue protein sequence, read N- to C-terminus: Dihydrolipoyllysine-residue succinyltransferase component of 2-oxoglutarate dehydrogenase complex (420 aa).

One can recognise a Lipoyl-binding domain in the interval 1-76 (MAEVKVPELA…EVGQAVAVVG (76 aa)). An N6-lipoyllysine modification is found at lysine 42. The disordered stretch occupies residues 75–201 (VGEGQVNTSN…EKMSRRKKTA (127 aa)). Polar residues predominate over residues 81–90 (NTSNDSSNES). Residues 91-102 (SQKDEAKEKETP) show a composition bias toward basic and acidic residues. A compositionally biased stretch (polar residues) spans 103–127 (KQSNPNSSESENTQDNSQQRINATP). The Peripheral subunit-binding (PSBD) domain occupies 124–160 (NATPSARRHARKNGVDLSEVSGKGNDVLRKDDVENSQ). The span at 149–158 (DVLRKDDVEN) shows a compositional bias: basic and acidic residues. The segment covering 159 to 188 (SQKSSSQTAKSESKSQNSGSKQSNNNPSKP) has biased composition (low complexity). Active-site residues include histidine 391 and aspartate 395.

It belongs to the 2-oxoacid dehydrogenase family. Forms a 24-polypeptide structural core with octahedral symmetry. Part of the 2-oxoglutarate dehydrogenase (OGDH) complex composed of E1 (2-oxoglutarate dehydrogenase), E2 (dihydrolipoamide succinyltransferase) and E3 (dihydrolipoamide dehydrogenase); the complex contains multiple copies of the three enzymatic components (E1, E2 and E3). (R)-lipoate is required as a cofactor.

The enzyme catalyses N(6)-[(R)-dihydrolipoyl]-L-lysyl-[protein] + succinyl-CoA = N(6)-[(R)-S(8)-succinyldihydrolipoyl]-L-lysyl-[protein] + CoA. It participates in amino-acid degradation; L-lysine degradation via saccharopine pathway; glutaryl-CoA from L-lysine: step 6/6. Its function is as follows. E2 component of the 2-oxoglutarate dehydrogenase (OGDH) complex which catalyzes the second step in the conversion of 2-oxoglutarate to succinyl-CoA and CO(2). The chain is Dihydrolipoyllysine-residue succinyltransferase component of 2-oxoglutarate dehydrogenase complex (odhB) from Staphylococcus epidermidis (strain ATCC 12228 / FDA PCI 1200).